The sequence spans 673 residues: UvrABC system protein B (673 aa).

The region spanning 26–183 (EGLEDGLAHQ…RRLAELQYTR (158 aa)) is the Helicase ATP-binding domain. 39–46 (GVTGSGKT) is a binding site for ATP. Residues 92-115 (YYDYYQPEAYVPSSDTFIEKDASV) carry the Beta-hairpin motif. Positions 431–597 (QVDDLLSEIR…GLNKKVVDIL (167 aa)) constitute a Helicase C-terminal domain. In terms of domain architecture, UVR spans 633 to 668 (QQKIHELEGQMMQHAQNLEFEEAAQIRDQLHQLREL).

It belongs to the UvrB family. As to quaternary structure, forms a heterotetramer with UvrA during the search for lesions. Interacts with UvrC in an incision complex.

The protein localises to the cytoplasm. In terms of biological role, the UvrABC repair system catalyzes the recognition and processing of DNA lesions. A damage recognition complex composed of 2 UvrA and 2 UvrB subunits scans DNA for abnormalities. Upon binding of the UvrA(2)B(2) complex to a putative damaged site, the DNA wraps around one UvrB monomer. DNA wrap is dependent on ATP binding by UvrB and probably causes local melting of the DNA helix, facilitating insertion of UvrB beta-hairpin between the DNA strands. Then UvrB probes one DNA strand for the presence of a lesion. If a lesion is found the UvrA subunits dissociate and the UvrB-DNA preincision complex is formed. This complex is subsequently bound by UvrC and the second UvrB is released. If no lesion is found, the DNA wraps around the other UvrB subunit that will check the other stand for damage. In Salmonella arizonae (strain ATCC BAA-731 / CDC346-86 / RSK2980), this protein is UvrABC system protein B.